We begin with the raw amino-acid sequence, 390 residues long: Chorismate synthase 1 (390 aa).

NADP(+) is bound by residues R39 and R45. A disordered region spans residues 95–117; it reads EQEEKEMKRKVTKPRPGHADLNG. FMN contacts are provided by residues 132–134, 253–254, G298, 313–317, and R339; these read RSS, NA, and KPIPT.

Belongs to the chorismate synthase family. As to quaternary structure, homotetramer. FMNH2 is required as a cofactor.

It carries out the reaction 5-O-(1-carboxyvinyl)-3-phosphoshikimate = chorismate + phosphate. Its pathway is metabolic intermediate biosynthesis; chorismate biosynthesis; chorismate from D-erythrose 4-phosphate and phosphoenolpyruvate: step 7/7. Its function is as follows. Catalyzes the anti-1,4-elimination of the C-3 phosphate and the C-6 proR hydrogen from 5-enolpyruvylshikimate-3-phosphate (EPSP) to yield chorismate, which is the branch point compound that serves as the starting substrate for the three terminal pathways of aromatic amino acid biosynthesis. This reaction introduces a second double bond into the aromatic ring system. The polypeptide is Chorismate synthase 1 (Bacillus cereus (strain ATCC 10987 / NRS 248)).